Here is a 412-residue protein sequence, read N- to C-terminus: Angiopoietin-related protein 4 (412 aa).

The signal sequence occupies residues Met-1–Ala-23. Positions Glu-106–Leu-153 form a coiled coil. Asn-183 carries N-linked (GlcNAc...) asparagine glycosylation. The Fibrinogen C-terminal domain maps to Ser-185 to Val-407. Disulfide bonds link Cys-194/Cys-222 and Cys-347/Cys-360.

As to quaternary structure, homooligomer; disulfide-linked via Cys residues in the N-terminal part of the protein. The homooligomer undergoes proteolytic processing to release the ANGPTL4 C-terminal chain, which circulates as a monomer. The homooligomer unprocessed form is able to interact with the extracellular matrix. Post-translationally, N-glycosylated. In terms of processing, forms disulfide-linked dimers and tetramers. Cleaved into a smaller N-terminal chain and a larger chain that contains the fibrinogen C-terminal domain; both cleaved and uncleaved forms are detected in the extracellular space. The cleaved form is not present within the cell.

It is found in the secreted. The protein localises to the extracellular space. The protein resides in the extracellular matrix. Functionally, mediates inactivation of the lipoprotein lipase LPL, and thereby plays a role in the regulation of triglyceride clearance from the blood serum and in lipid metabolism. May also play a role in regulating glucose homeostasis and insulin sensitivity. Inhibits proliferation, migration, and tubule formation of endothelial cells and reduces vascular leakage. Upon heterologous expression, inhibits the adhesion of endothelial cell to the extracellular matrix (ECM), and inhibits the reorganization of the actin cytoskeleton, formation of actin stress fibers and focal adhesions in endothelial cells that have adhered to ANGPTL4-containing ECM (in vitro). Depending on context, may modulate tumor-related angiogenesis. Its function is as follows. Mediates inactivation of the lipoprotein lipase LPL, and thereby plays an important role in the regulation of triglyceride clearance from the blood serum and in lipid metabolism. Has higher activity in LPL inactivation than the uncleaved protein. The chain is Angiopoietin-related protein 4 (ANGPTL4) from Sus scrofa (Pig).